Here is a 92-residue protein sequence, read N- to C-terminus: Acylphosphatase (92 aa).

The cysteines at positions 5 and 49 are disulfide-linked. The Acylphosphatase-like domain occupies 5-92 (CIIAWVYGRV…SGELTDFRIR (88 aa)). Catalysis depends on residues Arg20 and Asn38.

This sequence belongs to the acylphosphatase family.

It catalyses the reaction an acyl phosphate + H2O = a carboxylate + phosphate + H(+). This Escherichia coli O6:H1 (strain CFT073 / ATCC 700928 / UPEC) protein is Acylphosphatase.